The sequence spans 491 residues: Glutamate--tRNA ligase (491 aa).

The short motif at 13–23 (PSPTGFLHIGN) is the 'HIGH' region element. Cys-110, Cys-112, Cys-137, and His-139 together coordinate Zn(2+). The 'KMSKS' region motif lies at 254–258 (KLSKR). Position 257 (Lys-257) interacts with ATP.

This sequence belongs to the class-I aminoacyl-tRNA synthetase family. Glutamate--tRNA ligase type 1 subfamily. Monomer. Requires Zn(2+) as cofactor.

The protein resides in the cytoplasm. The enzyme catalyses tRNA(Glu) + L-glutamate + ATP = L-glutamyl-tRNA(Glu) + AMP + diphosphate. Catalyzes the attachment of glutamate to tRNA(Glu) in a two-step reaction: glutamate is first activated by ATP to form Glu-AMP and then transferred to the acceptor end of tRNA(Glu). The chain is Glutamate--tRNA ligase from Listeria innocua serovar 6a (strain ATCC BAA-680 / CLIP 11262).